The chain runs to 83 residues: MTKGTTSMGQRHGRTHILCRRCGRNSYHVQWERCAACAYPRASRRRYNWSVKAIKRRRTGTGRCRYLKVVNRRIANHFKTPKA.

Zn(2+) contacts are provided by cysteine 19, cysteine 22, cysteine 34, and cysteine 37. The C4-type zinc finger occupies 19-37 (CRRCGRNSYHVQWERCAAC).

The protein belongs to the eukaryotic ribosomal protein eL37 family. Zn(2+) serves as cofactor.

Its function is as follows. Binds to the 23S rRNA. The protein is Large ribosomal subunit protein eL37 (RPL37) of Leishmania donovani.